Reading from the N-terminus, the 700-residue chain is Calpain-2 catalytic subunit (700 aa).

Ala2 carries the post-translational modification N-acetylalanine. A propeptide spans 2–19 (anchors to the small subunit); it reads AGIAAKLVKDREAAEGLG. Residues 45–344 enclose the Calpain catalytic domain; sequence LFQDPSFPAI…YSRLEICNLT (300 aa). The Ca(2+) site is built by Ile89, Gly91, and Asp96. Cys105 is a catalytic residue. Ca(2+)-binding residues include Glu175, Gln229, and Lys230. Residues His262 and Asn286 contribute to the active site. Ca(2+)-binding residues include Glu292, Asp299, and Glu323. Residues 345-514 form a domain III region; that stretch reads PDTLTSDTYK…KKADYQAVDD (170 aa). Residues 515–529 are linker; sequence EIEANLEEFDISEDD. The segment at 530-700 is domain IV; sequence IDDGFRRLFA…LISWLCFSVL (171 aa). Ala542, Asp545, Glu547, Glu552, Asp585, Asp587, Ser589, Lys591, Glu596, Asp615, Asp617, Ser619, Thr621, Glu626, Asp658, and Asn661 together coordinate Ca(2+). 2 consecutive EF-hand domains span residues 572–605 and 602–637; these read FSIE…TKIQ and TKIQ…AGFK. Positions 667-700 constitute an EF-hand 3 domain; that stretch reads VRLETLFKIFKQLDPENTGTIELDLISWLCFSVL.

Belongs to the peptidase C2 family. Forms a heterodimer with a small (regulatory) subunit (CAPNS1). Interacts with CPEB3; this leads to cleavage of CPEB3. Requires Ca(2+) as cofactor.

It is found in the cytoplasm. Its subcellular location is the cell membrane. The catalysed reaction is Broad endopeptidase specificity.. Activated by 200-1000 micromolar concentrations of calcium and inhibited by calpastatin. Calcium-regulated non-lysosomal thiol-protease which catalyzes limited proteolysis of substrates involved in cytoskeletal remodeling and signal transduction. Proteolytically cleaves MYOC at 'Arg-226'. Proteolytically cleaves CPEB3 following neuronal stimulation which abolishes CPEB3 translational repressor activity, leading to translation of CPEB3 target mRNAs. The polypeptide is Calpain-2 catalytic subunit (CAPN2) (Macaca fascicularis (Crab-eating macaque)).